Here is a 599-residue protein sequence, read N- to C-terminus: Aspartate--tRNA(Asp/Asn) ligase (599 aa).

Glu-173 is an L-aspartate binding site. The aspartate stretch occupies residues 197–200 (QLYK). An L-aspartate-binding site is contributed by Arg-219. Residues 219 to 221 (RDE) and Gln-228 contribute to the ATP site. His-451 contacts L-aspartate. Glu-484 lines the ATP pocket. L-aspartate is bound at residue Arg-491. ATP is bound at residue 536 to 539 (GLDR).

It belongs to the class-II aminoacyl-tRNA synthetase family. Type 1 subfamily. Homodimer.

It is found in the cytoplasm. It carries out the reaction tRNA(Asx) + L-aspartate + ATP = L-aspartyl-tRNA(Asx) + AMP + diphosphate. In terms of biological role, aspartyl-tRNA synthetase with relaxed tRNA specificity since it is able to aspartylate not only its cognate tRNA(Asp) but also tRNA(Asn). Reaction proceeds in two steps: L-aspartate is first activated by ATP to form Asp-AMP and then transferred to the acceptor end of tRNA(Asp/Asn). The chain is Aspartate--tRNA(Asp/Asn) ligase from Methylococcus capsulatus (strain ATCC 33009 / NCIMB 11132 / Bath).